The sequence spans 344 residues: Follistatin (344 aa).

The signal sequence occupies residues 1-29 (MVCARHQPGGLCLLLLLLCQFMEDRSAQA). In terms of domain architecture, TB spans 30–103 (GNCWLRQAKN…TCENVDCGPG (74 aa)). 18 cysteine pairs are disulfide-bonded: cysteine 32-cysteine 55, cysteine 42-cysteine 88, cysteine 56-cysteine 91, cysteine 95-cysteine 106, cysteine 100-cysteine 116, cysteine 118-cysteine 150, cysteine 122-cysteine 143, cysteine 132-cysteine 164, cysteine 168-cysteine 179, cysteine 173-cysteine 189, cysteine 192-cysteine 225, cysteine 196-cysteine 218, cysteine 207-cysteine 239, cysteine 245-cysteine 256, cysteine 250-cysteine 267, cysteine 270-cysteine 302, cysteine 274-cysteine 295, and cysteine 284-cysteine 316. In terms of domain architecture, Follistatin-like 1 spans 94 to 117 (TCENVDCGPGKKCRMNKKNKPRCV). A Kazal-like 1 domain is found at 112 to 166 (NKPRCVCAPDCSNITWKGPVCGLDGKTYRNECALLKARCKEQPELEVQYQGKCKK). N-linked (GlcNAc...) asparagine glycosylation is present at asparagine 124. The Follistatin-like 2 domain occupies 167-190 (TCRDVFCPGSSTCVVDQTNNAYCV). The 56-residue stretch at 186–241 (NAYCVTCNRICPEPSSSEQYLCGNDGVTYSSACHLRKATCLLGRSIGLAYEGKCIK) folds into the Kazal-like 2 domain. One can recognise a Follistatin-like 3 domain in the interval 244–268 (SCEDIQCGGGKKCLWDSKVGRGRCS). The 55-residue stretch at 264–318 (RGRCSLCDELCPDSKSDEPVCASDNATYASECAMKEAACSSGVLLEVKHSGSCNS) folds into the Kazal-like 3 domain. The N-linked (GlcNAc...) asparagine glycan is linked to asparagine 288. A disordered region spans residues 315-344 (SCNSISEETEEEEEEEDQDYSFPISSILEW). The segment covering 321–333 (EETEEEEEEEDQD) has biased composition (acidic residues).

As to quaternary structure, interacts with GDF11. Interacts with activin A/INHBA. Interacts with myostatin/MSTN.

The protein resides in the secreted. It is found in the nucleus. It localises to the nucleolus. In terms of biological role, multifunctional regulatory protein whose primary function is to antagonize members of the transforming growth factor beta (TGF-beta) superfamily including activin, myostatin, GDF11 or bone morphogenetic proteins (BMPs). Mechanistically, binds to these ligands in the extracellular space, blocking their type II receptor-binding site to inhibit downstream signaling. Plays an essential role in muscle fiber formation and growth both by preventing the repressive effects of myostatin and through SMAD3/AKT/mTOR signaling independently of myostatin. Also promotes neural differentiation by antagonizing the action BMP4. Acts as a specific inhibitor of the biosynthesis and secretion of pituitary follicle stimulating hormone (FSH) by sequestering activin A/INHBA. On the other hand, translocates into the nucleus where it down-regulates rRNA synthesis and ribosome biogenesis to maintain cellular energy homeostasis by binding to rDNA. The protein is Follistatin of Mus musculus (Mouse).